A 192-amino-acid chain; its full sequence is Probable nicotinate-nucleotide adenylyltransferase (192 aa).

Belongs to the NadD family.

The enzyme catalyses nicotinate beta-D-ribonucleotide + ATP + H(+) = deamido-NAD(+) + diphosphate. It participates in cofactor biosynthesis; NAD(+) biosynthesis; deamido-NAD(+) from nicotinate D-ribonucleotide: step 1/1. Functionally, catalyzes the reversible adenylation of nicotinate mononucleotide (NaMN) to nicotinic acid adenine dinucleotide (NaAD). This is Probable nicotinate-nucleotide adenylyltransferase from Staphylococcus haemolyticus (strain JCSC1435).